The chain runs to 560 residues: Membrane protein insertase YidC (560 aa).

Helical transmembrane passes span 5-25 (IINL…WQYF), 334-354 (AIDF…MNFF), 357-377 (YVGN…LLMF), 431-451 (LPIL…YVTI), 476-496 (LFGL…WPIL), and 522-542 (FMPL…LIYW).

This sequence belongs to the OXA1/ALB3/YidC family. Type 1 subfamily. In terms of assembly, interacts with the Sec translocase complex via SecD. Specifically interacts with transmembrane segments of nascent integral membrane proteins during membrane integration.

The protein resides in the cell inner membrane. Its function is as follows. Required for the insertion and/or proper folding and/or complex formation of integral membrane proteins into the membrane. Involved in integration of membrane proteins that insert both dependently and independently of the Sec translocase complex, as well as at least some lipoproteins. Aids folding of multispanning membrane proteins. The sequence is that of Membrane protein insertase YidC from Rickettsia rickettsii (strain Sheila Smith).